A 403-amino-acid polypeptide reads, in one-letter code: Myeloid cell surface antigen CD33 (403 aa).

The first 16 residues, 1–16 (MLWPLPLFLLCAGSLA), serve as a signal peptide directing secretion. One can recognise an Ig-like V-type domain in the interval 17-120 (QDLEFQLVAP…DTGMYFFRVV (104 aa)). Over 18–240 (DLEFQLVAPE…VTRKSGQMRE (223 aa)) the chain is Extracellular. Intrachain disulfides connect Cys36/Cys169, Cys41/Cys100, and Cys163/Cys212. Asn110 carries an N-linked (GlcNAc...) asparagine glycan. Arg118 is a binding site for N-acetylneuraminate. The Ig-like C2-type domain maps to 145-228 (PDIIIPGTLE…AGVTVERTIQ (84 aa)). The N-linked (GlcNAc...) asparagine glycan is linked to Asn160. A glycan (N-linked (GlcNAc...) asparagine) is linked at Asn230. The helical transmembrane segment at 241 to 267 (LVLVAVGEATVKLLILGLCLVFLIVMF) threads the bilayer. Residues 268–403 (CRRKTTKLSV…MLLCVSLTLS (136 aa)) lie on the Cytoplasmic side of the membrane.

Belongs to the immunoglobulin superfamily. SIGLEC (sialic acid binding Ig-like lectin) family. As to quaternary structure, homodimer; disulfide-linked. Interacts with PTPN6/SHP-1 and PTPN11/SHP-2 upon phosphorylation. Interacts with C1QA (via C-terminus); this interaction activates CD33 inhibitory motifs. In terms of processing, glycosylated. Phosphorylation is involved in binding to PTPN6 and PTPN11. As to expression, expressed on myeloid precursors in the bone marrow. In the peripheral blood, mostly expressed on granulocytes.

The protein localises to the cell membrane. Sialic-acid-binding immunoglobulin-like lectin (Siglec) that plays a role in mediating cell-cell interactions and in maintaining immune cells in a resting state. Preferentially binds sialic acid to the short O-linked glycans of certain mucins. This is Myeloid cell surface antigen CD33 (Cd33) from Mus musculus (Mouse).